A 312-amino-acid polypeptide reads, in one-letter code: Probable myosin light chain kinase DDB_G0282429 (312 aa).

The tract at residues 1-28 (MDRMDSSDEEIDNISDDELQSGDEIEVE) is disordered. Over residues 7–27 (SDEEIDNISDDELQSGDEIEV) the composition is skewed to acidic residues. Positions 38–290 (YILGNEIGRG…FEQCLIHPWV (253 aa)) constitute a Protein kinase domain. ATP contacts are provided by residues 44–52 (IGRGAFSIV) and Lys67. Asp158 acts as the Proton acceptor in catalysis.

It belongs to the protein kinase superfamily. CAMK Ser/Thr protein kinase family. CaMK subfamily.

It carries out the reaction L-seryl-[myosin light chain] + ATP = O-phospho-L-seryl-[myosin light chain] + ADP + H(+). The catalysed reaction is L-threonyl-[myosin light chain] + ATP = O-phospho-L-threonyl-[myosin light chain] + ADP + H(+). Does not have a calmodulin-binding domain. In terms of biological role, may phosphorylate a specific serine in the N-terminus of a myosin light chain. This chain is Probable myosin light chain kinase DDB_G0282429, found in Dictyostelium discoideum (Social amoeba).